The sequence spans 356 residues: sn-glycerol-3-phosphate import ATP-binding protein UgpC (356 aa).

An ABC transporter domain is found at Leu4–Ile235. Gly37 to Ser44 is an ATP binding site.

This sequence belongs to the ABC transporter superfamily. sn-glycerol-3-phosphate importer (TC 3.A.1.1.3) family. As to quaternary structure, the complex is composed of two ATP-binding proteins (UgpC), two transmembrane proteins (UgpA and UgpE) and a solute-binding protein (UgpB).

The protein resides in the cell inner membrane. It carries out the reaction sn-glycerol 3-phosphate(out) + ATP + H2O = sn-glycerol 3-phosphate(in) + ADP + phosphate + H(+). Part of the ABC transporter complex UgpBAEC involved in sn-glycerol-3-phosphate (G3P) import. Responsible for energy coupling to the transport system. The sequence is that of sn-glycerol-3-phosphate import ATP-binding protein UgpC from Shigella sonnei (strain Ss046).